The following is a 216-amino-acid chain: Pyrophosphatase PpaX (216 aa).

The active-site Nucleophile is the aspartate 9.

It belongs to the HAD-like hydrolase superfamily. PpaX family. Mg(2+) is required as a cofactor.

The enzyme catalyses diphosphate + H2O = 2 phosphate + H(+). In terms of biological role, hydrolyzes pyrophosphate formed during P-Ser-HPr dephosphorylation by HPrK/P. Might play a role in controlling the intracellular pyrophosphate pool. This Bacillus cereus (strain AH820) protein is Pyrophosphatase PpaX.